A 204-amino-acid chain; its full sequence is Large ribosomal subunit protein mL67 (204 aa).

Belongs to the mitochondrion-specific ribosomal protein mL67 family.

The protein localises to the nucleus. It is found in the mitochondrion. Functionally, transcription factor involved in regulation of RNA polymerase II-dependent transcription. Also involved in regulation of mitochondrial DNA recombination, maintenance and repair, and generation of homoplasmic cells. This chain is Large ribosomal subunit protein mL67 (MHR1), found in Yarrowia lipolytica (strain CLIB 122 / E 150) (Yeast).